The primary structure comprises 505 residues: Catalase (505 aa).

Active-site residues include His-58 and Asn-131. Tyr-341 is a heme binding site.

The protein belongs to the catalase family. The cofactor is heme.

It catalyses the reaction 2 H2O2 = O2 + 2 H2O. In terms of biological role, decomposes hydrogen peroxide into water and oxygen; serves to protect cells from the toxic effects of hydrogen peroxide. This chain is Catalase (kat), found in Methanosarcina barkeri (strain Fusaro / DSM 804).